The primary structure comprises 537 residues: Putative cysteine ligase BshC (537 aa).

A coiled-coil region spans residues 383 to 451; that stretch reads MERTQKLLKQ…EVKENQDNFN (69 aa).

Belongs to the BshC family.

Functionally, involved in bacillithiol (BSH) biosynthesis. May catalyze the last step of the pathway, the addition of cysteine to glucosamine malate (GlcN-Mal) to generate BSH. This Staphylococcus haemolyticus (strain JCSC1435) protein is Putative cysteine ligase BshC.